A 242-amino-acid chain; its full sequence is UDP-2,3-diacylglucosamine hydrolase (242 aa).

Residues Asp8, His10, Asp41, Asn79, and His114 each contribute to the Mn(2+) site. 79–80 (NR) contributes to the substrate binding site. Asp122, Lys164, Lys167, and His195 together coordinate substrate. 2 residues coordinate Mn(2+): His195 and His197.

Belongs to the LpxH family. It depends on Mn(2+) as a cofactor.

Its subcellular location is the cell inner membrane. The enzyme catalyses UDP-2-N,3-O-bis[(3R)-3-hydroxytetradecanoyl]-alpha-D-glucosamine + H2O = 2-N,3-O-bis[(3R)-3-hydroxytetradecanoyl]-alpha-D-glucosaminyl 1-phosphate + UMP + 2 H(+). The protein operates within glycolipid biosynthesis; lipid IV(A) biosynthesis; lipid IV(A) from (3R)-3-hydroxytetradecanoyl-[acyl-carrier-protein] and UDP-N-acetyl-alpha-D-glucosamine: step 4/6. Its function is as follows. Hydrolyzes the pyrophosphate bond of UDP-2,3-diacylglucosamine to yield 2,3-diacylglucosamine 1-phosphate (lipid X) and UMP by catalyzing the attack of water at the alpha-P atom. Involved in the biosynthesis of lipid A, a phosphorylated glycolipid that anchors the lipopolysaccharide to the outer membrane of the cell. The sequence is that of UDP-2,3-diacylglucosamine hydrolase from Vibrio cholerae serotype O1 (strain ATCC 39315 / El Tor Inaba N16961).